We begin with the raw amino-acid sequence, 137 residues long: Large ribosomal subunit protein uL16 (137 aa).

The protein belongs to the universal ribosomal protein uL16 family. In terms of assembly, part of the 50S ribosomal subunit.

Binds 23S rRNA and is also seen to make contacts with the A and possibly P site tRNAs. The protein is Large ribosomal subunit protein uL16 of Rhodopseudomonas palustris (strain HaA2).